A 296-amino-acid chain; its full sequence is Probable ribosomal RNA small subunit methyltransferase A (296 aa).

Positions 1–16 (MTDATSGSDPDSTTPV) are enriched in polar residues. Positions 1–25 (MTDATSGSDPDSTTPVDLTGEDFRD) are disordered. S-adenosyl-L-methionine-binding residues include H44, L46, G72, E93, D121, and N136.

Belongs to the class I-like SAM-binding methyltransferase superfamily. rRNA adenine N(6)-methyltransferase family. RsmA subfamily.

Its subcellular location is the cytoplasm. Functionally, specifically dimethylates two adjacent adenosines in the loop of a conserved hairpin near the 3'-end of 16S rRNA in the 30S particle. May play a critical role in biogenesis of 30S subunits. This chain is Probable ribosomal RNA small subunit methyltransferase A, found in Haloquadratum walsbyi (strain DSM 16790 / HBSQ001).